The following is a 61-amino-acid chain: Bowman-Birk type proteinase inhibitor B5 (61 aa).

6 disulfides stabilise this stretch: Cys5–Cys60, Cys6–Cys22, Cys9–Cys56, Cys12–Cys20, Cys29–Cys36, and Cys33–Cys48.

This sequence belongs to the Bowman-Birk serine protease inhibitor family. In terms of tissue distribution, expressed in bulb (at protein level).

Functionally, serine protease inhibitor. Inhibits trypsin (Ki = 41 nM) and weakly inhibits chymotrypsin (Ki = 410 nM). Does not inhibit bacterial subtilisin. This is Bowman-Birk type proteinase inhibitor B5 from Hyacinthus orientalis (Common hyacinth).